The chain runs to 365 residues: Cytoplasmic tRNA 2-thiolation protein 1 (365 aa).

Belongs to the TtcA family. CTU1/NCS6/ATPBD3 subfamily.

The protein resides in the cytoplasm. It functions in the pathway tRNA modification; 5-methoxycarbonylmethyl-2-thiouridine-tRNA biosynthesis. Its function is as follows. Plays a central role in 2-thiolation of mcm(5)S(2)U at tRNA wobble positions of tRNA(Lys), tRNA(Glu) and tRNA(Gln). Directly binds tRNAs and probably acts by catalyzing adenylation of tRNAs, an intermediate required for 2-thiolation. It is unclear whether it acts as a sulfurtransferase that transfers sulfur from thiocarboxylated URM1 onto the uridine of tRNAs at wobble position. Prior mcm(5) tRNA modification by the elongator complex is required for 2-thiolation. May also be involved in protein urmylation. The chain is Cytoplasmic tRNA 2-thiolation protein 1 from Yarrowia lipolytica (strain CLIB 122 / E 150) (Yeast).